The primary structure comprises 338 residues: GTPase Obg (338 aa).

An Obg domain is found at 1 to 159 (MQFIDEVKIH…RWLRLELKLM (159 aa)). The disordered stretch occupies residues 66 to 91 (KAGRGKNGMGKDRHGANGDDLTIPVP). One can recognise an OBG-type G domain in the interval 160-331 (ADVGLLGFPN…LLDEIARHLW (172 aa)). Residues 166 to 173 (GFPNVGKS), 191 to 195 (FTTIK), 213 to 216 (DIPG), 283 to 286 (NKID), and 312 to 314 (SAA) each bind GTP. Mg(2+)-binding residues include serine 173 and threonine 193.

The protein belongs to the TRAFAC class OBG-HflX-like GTPase superfamily. OBG GTPase family. Monomer. Mg(2+) is required as a cofactor.

The protein resides in the cytoplasm. Functionally, an essential GTPase which binds GTP, GDP and possibly (p)ppGpp with moderate affinity, with high nucleotide exchange rates and a fairly low GTP hydrolysis rate. Plays a role in control of the cell cycle, stress response, ribosome biogenesis and in those bacteria that undergo differentiation, in morphogenesis control. This is GTPase Obg from Geobacter metallireducens (strain ATCC 53774 / DSM 7210 / GS-15).